Consider the following 156-residue polypeptide: ATP synthase subunit b (156 aa).

The chain crosses the membrane as a helical span at residues leucine 5–valine 25.

This sequence belongs to the ATPase B chain family. F-type ATPases have 2 components, F(1) - the catalytic core - and F(0) - the membrane proton channel. F(1) has five subunits: alpha(3), beta(3), gamma(1), delta(1), epsilon(1). F(0) has three main subunits: a(1), b(2) and c(10-14). The alpha and beta chains form an alternating ring which encloses part of the gamma chain. F(1) is attached to F(0) by a central stalk formed by the gamma and epsilon chains, while a peripheral stalk is formed by the delta and b chains.

Its subcellular location is the cell inner membrane. Its function is as follows. F(1)F(0) ATP synthase produces ATP from ADP in the presence of a proton or sodium gradient. F-type ATPases consist of two structural domains, F(1) containing the extramembraneous catalytic core and F(0) containing the membrane proton channel, linked together by a central stalk and a peripheral stalk. During catalysis, ATP synthesis in the catalytic domain of F(1) is coupled via a rotary mechanism of the central stalk subunits to proton translocation. Component of the F(0) channel, it forms part of the peripheral stalk, linking F(1) to F(0). The protein is ATP synthase subunit b of Acinetobacter baylyi (strain ATCC 33305 / BD413 / ADP1).